A 101-amino-acid chain; its full sequence is MVNVTVTFTITEFCLHTGVSEEELNEIVGLGVIEPCENETASWLFDDHAAIVVQRALRLRQELALDWPGIAMTLTLLEENDRLRQENRLLIQRLSRFIKHP.

Belongs to the CbpM family.

Its function is as follows. Interacts with CbpA and inhibits both the DnaJ-like co-chaperone activity and the DNA binding activity of CbpA. Together with CbpA, modulates the activity of the DnaK chaperone system. Does not inhibit the co-chaperone activity of DnaJ. This chain is Chaperone modulatory protein CbpM, found in Citrobacter koseri (strain ATCC BAA-895 / CDC 4225-83 / SGSC4696).